A 553-amino-acid polypeptide reads, in one-letter code: Protein YloV (553 aa).

One can recognise a DhaL domain in the interval 9–201 (RTFAEMILAG…LLCVYEGFLA (193 aa)).

The chain is Protein YloV (yloV) from Bacillus subtilis (strain 168).